The sequence spans 442 residues: Protein IQ-DOMAIN 33 (442 aa).

An IQ domain is found at glutamate 159–lysine 188. A disordered region spans residues glutamate 184–glycine 212. The span at aspartate 199 to glycine 212 shows a compositional bias: polar residues. Residues arginine 270–leucine 282 are calmodulin-binding. The segment at glutamate 375–threonine 442 is disordered. Over residues isoleucine 383–glutamine 402 the composition is skewed to basic residues. The Nuclear localization signal signature appears at lysine 385–tyrosine 392.

This sequence belongs to the IQD family. In terms of assembly, binds to multiple calmodulin (CaM) in the presence of Ca(2+) and CaM-like proteins.

The protein resides in the nucleus. In terms of biological role, may be involved in cooperative interactions with calmodulins or calmodulin-like proteins. Recruits calmodulin proteins to microtubules, thus being a potential scaffold in cellular signaling and trafficking. May associate with nucleic acids and regulate gene expression at the transcriptional or post-transcriptional level. The chain is Protein IQ-DOMAIN 33 from Arabidopsis thaliana (Mouse-ear cress).